The following is a 750-amino-acid chain: uncharacterized protein (750 aa).

Helical transmembrane passes span 1–21, 465–485, and 586–606; these read MSIISSWLLVSIICLTTSIVT, YGANETGIATFIPGSSIISYL, and GMFGAAIYSWNFEGMSFVAVS.

It localises to the membrane. This is an uncharacterized protein from Saccharomyces cerevisiae (strain ATCC 204508 / S288c) (Baker's yeast).